The chain runs to 304 residues: MSTPPPDAAPTLEPVKPPTAELLIVTGMSGAGRSTAANALEDLGWYVVDNLPPQMLGTLADLASRTPQSLPKLAVVIDVRGKALFNDMKETLAALEHSGVEFSVLFLEASDEVLVSRYELQRRPHPLQAGGRILDGIRAERELLKDLRETADSVLDTTSFNVHALTRAVADMFSTSGPVVLRLTVMSFGFKYGVPADANFVADVRFIPNPHWVPALRPRTGKDPEVRDYVFATDGAQTFVDRFVSMLEPVFAGYRTESKHYATIAIGCTGGKHRSVAITEEVARRLSKSPRVTVNLQHRDMGRE.

Position 27-34 (27-34 (GMSGAGRS)) interacts with ATP. Position 78–81 (78–81 (DVRG)) interacts with GTP.

Belongs to the RapZ-like family.

Its function is as follows. Displays ATPase and GTPase activities. The protein is Nucleotide-binding protein KRH_12070 of Kocuria rhizophila (strain ATCC 9341 / DSM 348 / NBRC 103217 / DC2201).